A 322-amino-acid polypeptide reads, in one-letter code: MSGERAKRFPLALEDLKREPRKPEGRVAERQAAGDAARQRLTAAAAAPAAASPIVPERRAPHGGVFAAKPARAKQHAPAAPGAAKRAPQGGAKQGDRSAAPNVALSGALALTSERVRERMVERLRANGVADPRVLAAMSAVPRHMFVDPGLAAQAYEDAALPIGHQQTISKPSVVARMIELAAAGRALERVLEIGTGCGYQAAVLSRVARDVYSIERVKPLYERAKLNLRPLRVPNIRLHYGDGRVGLPAAAPFDAIVIAAAGLDVPRALLEQLAIGGRLVAPVGEQAGEQVLTLVERVAPAQWRESRLDRVFFVPLKSGVI.

The disordered stretch occupies residues 1–101; sequence MSGERAKRFP…AKQGDRSAAP (101 aa). The span at 14 to 29 shows a compositional bias: basic and acidic residues; the sequence is EDLKREPRKPEGRVAE. Composition is skewed to low complexity over residues 33–51 and 76–91; these read AGDA…PAAA and HAPA…PQGG. The active site involves serine 170.

Belongs to the methyltransferase superfamily. L-isoaspartyl/D-aspartyl protein methyltransferase family.

It is found in the cytoplasm. It carries out the reaction [protein]-L-isoaspartate + S-adenosyl-L-methionine = [protein]-L-isoaspartate alpha-methyl ester + S-adenosyl-L-homocysteine. Catalyzes the methyl esterification of L-isoaspartyl residues in peptides and proteins that result from spontaneous decomposition of normal L-aspartyl and L-asparaginyl residues. It plays a role in the repair and/or degradation of damaged proteins. This Burkholderia pseudomallei (strain 1710b) protein is Protein-L-isoaspartate O-methyltransferase.